The sequence spans 604 residues: Prostaglandin G/H synthase 2 (604 aa).

A signal peptide spans 1–17 (MLARALLLCVALALGHA). In terms of domain architecture, EGF-like spans 18–55 (ANPCCSNPCQNRGVCMSVGFDQYQCDCTRTGFYGENCS). Disulfide bonds link cysteine 21–cysteine 32, cysteine 22–cysteine 145, cysteine 26–cysteine 42, and cysteine 44–cysteine 54. An N-linked (GlcNAc...) asparagine glycan is attached at asparagine 53. Substrate is bound at residue arginine 106. N-linked (GlcNAc...) asparagine glycosylation occurs at asparagine 130. Residue histidine 193 is the Proton acceptor of the active site. A substrate-binding site is contributed by tyrosine 341. Tyrosine 371 functions as the For cyclooxygenase activity in the catalytic mechanism. Heme b is bound at residue histidine 374. N-linked (GlcNAc...) asparagine glycosylation is present at asparagine 396. The residue at position 526 (cysteine 526) is an S-nitrosocysteine. Cysteine 555 and cysteine 561 are disulfide-bonded. The N-linked (GlcNAc...) asparagine glycan is linked to asparagine 580.

Belongs to the prostaglandin G/H synthase family. Homodimer. Heme b is required as a cofactor. In terms of processing, S-nitrosylation by NOS2 (iNOS) activates enzyme activity. S-nitrosylation may take place on different Cys residues in addition to Cys-526.

The protein localises to the microsome membrane. It is found in the endoplasmic reticulum membrane. Its subcellular location is the nucleus inner membrane. It localises to the nucleus outer membrane. It catalyses the reaction (5Z,8Z,11Z,14Z)-eicosatetraenoate + AH2 + 2 O2 = prostaglandin H2 + A + H2O. It carries out the reaction (5Z,8Z,11Z,14Z)-eicosatetraenoate + 2 O2 = prostaglandin G2. The catalysed reaction is prostaglandin G2 + AH2 = prostaglandin H2 + A + H2O. The enzyme catalyses (5Z,8Z,11Z,14Z,17Z)-eicosapentaenoate + 2 O2 = prostaglandin G3. It catalyses the reaction prostaglandin G3 + AH2 = prostaglandin H3 + A + H2O. It carries out the reaction (8Z,11Z,14Z)-eicosatrienoate + 2 O2 = prostaglandin G1. The catalysed reaction is prostaglandin G1 + AH2 = prostaglandin H1 + A + H2O. The enzyme catalyses 2-(5Z,8Z,11Z,14Z)-eicosatetraenoyl-sn-glycero-3-phosphoethanolamine + 2 O2 = 2-(prostaglandin G2)-sn-glycero-3-phosphoethanolamine. It catalyses the reaction 2-(prostaglandin G2)-sn-glycero-3-phosphoethanolamine + AH2 = 2-(prostaglandin H2)-sn-glycero-3-phosphoethanolamine + A + H2O. It carries out the reaction 2-(5Z,8Z,11Z,14Z)-eicosatetraenoyl-sn-glycero-3-phosphocholine + 2 O2 = 2-(prostaglandin G2)-sn-glycero-3-phosphocholine. The catalysed reaction is 2-(prostaglandin G2)-sn-glycero-3-phosphocholine + AH2 = 2-(prostaglandin H2)-sn-glycero-3-phosphocholine + A + H2O. The enzyme catalyses (15S)-hydroperoxy-(5Z,8Z,11Z,13E)-eicosatetraenoate + AH2 = (15S)-hydroxy-(5Z,8Z,11Z,13E)-eicosatetraenoate + A + H2O. It catalyses the reaction 2-(5Z,8Z,11Z,14Z)-eicosatetraenoyl-sn-glycero-3-phosphocholine + AH2 + O2 = 2-[(15S)-hydroxy-(5Z,8Z,11Z,13E)-eicosatetraenoyl]-sn-glycero-3-phosphocholine + A + H2O. It carries out the reaction 2-(5Z,8Z,11Z,14Z)-eicosatetraenoyl-sn-glycero-3-phosphocholine + AH2 + O2 = 2-[(15R)-hydroxy-(5Z,8Z,11Z,13E)-eicosatetraenoyl]-sn-glycero-3-phosphocholine + A + H2O. The catalysed reaction is 2-(5Z,8Z,11Z,14Z)-eicosatetraenoyl-sn-glycero-3-phosphocholine + AH2 + O2 = 2-[(11R)-hydroxy-(5Z,8Z,12E,14Z)-eicosatetraenoyl]-sn-glycero-3-phosphocholine + A + H2O. The enzyme catalyses (9Z,12Z)-octadecadienoate + AH2 + O2 = 9-hydroxy-(10E,12Z)-octadecadienoate + A + H2O. It catalyses the reaction (9Z,12Z)-octadecadienoate + AH2 + O2 = 13-hydroxy-(9Z,11E)-octadecadienoate + A + H2O. It carries out the reaction (5Z,8Z,11Z,14Z)-eicosatetraenoate + AH2 + O2 = (15R)-hydroxy-(5Z,8Z,11Z,13E)-eicosatetraenoate + A + H2O. The catalysed reaction is (5Z,8Z,11Z,14Z)-eicosatetraenoate + AH2 + O2 = (11R)-hydroxy-(5Z,8Z,12E,14Z)-eicosatetraenoate + A + H2O. The enzyme catalyses (5Z,8Z,11Z,14Z,17Z)-eicosapentaenoate + AH2 + O2 = (11R)-hydroxy-(5Z,8Z,12E,14Z,17Z)-eicosapentaenoate + A + H2O. It catalyses the reaction (5Z,8Z,11Z,14Z,17Z)-eicosapentaenoate + AH2 + O2 = (18S)-hydroxy-(5Z,8Z,11Z,14Z,16E)-eicosapentaenoate + A + H2O. It carries out the reaction (5Z,8Z,11Z,14Z,17Z)-eicosapentaenoate + AH2 + O2 = (18R)-hydroxy-(5Z,8Z,11Z,14Z,16E)-eicosapentaenoate + A + H2O. The catalysed reaction is (5Z,8Z,11Z,14Z,17Z)-eicosapentaenoate + AH2 + O2 = (15R)-hydroxy-(5Z,8Z,11Z,13E,17Z)-eicosapentaenoate + A + H2O. The enzyme catalyses (5Z,8Z,11Z,14Z,17Z)-eicosapentaenoate + AH2 + O2 = (15S)-hydroxy-(5Z,8Z,11Z,13E,17Z)-eicosapentaenoate + A + H2O. It catalyses the reaction (7Z,10Z,13Z,16Z,19Z)-docosapentaenoate + AH2 + O2 = 13R-hydroxy-(7Z,10Z,14E,16Z,19Z)-docosapentaenoate + A + H2O. It carries out the reaction (4Z,7Z,10Z,13Z,16Z,19Z)-docosahexaenoate + AH2 + O2 = 13-hydroxy-(4Z,7Z,10Z,14E,16Z,19Z)-docosahexaenoate + A + H2O. The catalysed reaction is (5S)-hydroxy-(6E,8Z,11Z,14Z)-eicosatetraenoate + AH2 + O2 = (5S,15R)-dihydroxy-(6E,8Z,11Z,13E)-eicosatetraenoate + A + H2O. The enzyme catalyses (4Z,7Z,10Z,13Z,16Z,19Z)-docosahexaenoate + AH2 + O2 = 17R-hydroxy-(4Z,7Z,10Z,13Z,15E,19Z)-docosahexaenoate + A + H2O. It catalyses the reaction (5S)-hydroxy-(6E,8Z,11Z,14Z)-eicosatetraenoate + AH2 + O2 = (5S,15S)-dihydroxy-(6E,8Z,11Z,13E)-eicosatetraenoate + A + H2O. It carries out the reaction (5S)-hydroxy-(6E,8Z,11Z,14Z)-eicosatetraenoate + AH2 + O2 = (5S,11R)-dihydroxy-(6E,8Z,12E,14Z)-eicosatetraenoate + A + H2O. The catalysed reaction is 2-(5Z,8Z,11Z,14Z-eicosatetraenoyl)-glycerol + 2 O2 = 2-glyceryl-prostaglandin G2. The enzyme catalyses 2-glyceryl-prostaglandin G2 + AH2 = 2-glyceryl-prostaglandin H2 + A + H2O. It catalyses the reaction (5Z,8Z,11Z,14Z)-eicosatetraenoate + O2 = (15R)-hydroperoxy-(5Z,8Z,11Z,13E)-eicosatetraenoate. It carries out the reaction (5Z,8Z,11Z,14Z)-eicosatetraenoate + O2 = 11R-hydroperoxy-(5Z,8Z,12E,14Z)-eicosatetraenoate. The catalysed reaction is (9Z,12Z)-octadecadienoate + AH2 + O2 = (9R)-hydroxy-(10E,12Z)-octadecadienoate + A + H2O. The enzyme catalyses (9Z,12Z)-octadecadienoate + AH2 + O2 = (9S)-hydroxy-(10E,12Z)-octadecadienoate + A + H2O. It catalyses the reaction (9Z,12Z)-octadecadienoate + AH2 + O2 = (13S)-hydroxy-(9Z,11E)-octadecadienoate + A + H2O. It carries out the reaction (9Z,12Z)-octadecadienoate + AH2 + O2 = (13R)-hydroxy-(9Z,11E)-octadecadienoate + A + H2O. Its pathway is lipid metabolism; prostaglandin biosynthesis. Dual cyclooxygenase and peroxidase in the biosynthesis pathway of prostanoids, a class of C20 oxylipins mainly derived from arachidonate ((5Z,8Z,11Z,14Z)-eicosatetraenoate, AA, C20:4(n-6)), with a particular role in the inflammatory response. The cyclooxygenase activity oxygenates AA to the hydroperoxy endoperoxide prostaglandin G2 (PGG2), and the peroxidase activity reduces PGG2 to the hydroxy endoperoxide prostaglandin H2 (PGH2), the precursor of all 2-series prostaglandins and thromboxanes. This complex transformation is initiated by abstraction of hydrogen at carbon 13 (with S-stereochemistry), followed by insertion of molecular O2 to form the endoperoxide bridge between carbon 9 and 11 that defines prostaglandins. The insertion of a second molecule of O2 (bis-oxygenase activity) yields a hydroperoxy group in PGG2 that is then reduced to PGH2 by two electrons. Similarly catalyzes successive cyclooxygenation and peroxidation of dihomo-gamma-linoleate (DGLA, C20:3(n-6)) and eicosapentaenoate (EPA, C20:5(n-3)) to corresponding PGH1 and PGH3, the precursors of 1- and 3-series prostaglandins. In an alternative pathway of prostanoid biosynthesis, converts 2-arachidonoyl lysophopholipids to prostanoid lysophopholipids, which are then hydrolyzed by intracellular phospholipases to release free prostanoids. Metabolizes 2-arachidonoyl glycerol yielding the glyceryl ester of PGH2, a process that can contribute to pain response. Generates lipid mediators from n-3 and n-6 polyunsaturated fatty acids (PUFAs) via a lipoxygenase-type mechanism. Oxygenates PUFAs to hydroperoxy compounds and then reduces them to corresponding alcohols. Plays a role in the generation of resolution phase interaction products (resolvins) during both sterile and infectious inflammation. Metabolizes docosahexaenoate (DHA, C22:6(n-3)) to 17R-HDHA, a precursor of the D-series resolvins (RvDs). As a component of the biosynthetic pathway of E-series resolvins (RvEs), converts eicosapentaenoate (EPA, C20:5(n-3)) primarily to 18S-HEPE that is further metabolized by ALOX5 and LTA4H to generate 18S-RvE1 and 18S-RvE2. In vascular endothelial cells, converts docosapentaenoate (DPA, C22:5(n-3)) to 13R-HDPA, a precursor for 13-series resolvins (RvTs) shown to activate macrophage phagocytosis during bacterial infection. In activated leukocytes, contributes to oxygenation of hydroxyeicosatetraenoates (HETE) to diHETES (5,15-diHETE and 5,11-diHETE). Can also use linoleate (LA, (9Z,12Z)-octadecadienoate, C18:2(n-6)) as substrate and produce hydroxyoctadecadienoates (HODEs) in a regio- and stereospecific manner, being (9R)-HODE ((9R)-hydroxy-(10E,12Z)-octadecadienoate) and (13S)-HODE ((13S)-hydroxy-(9Z,11E)-octadecadienoate) its major products. During neuroinflammation, plays a role in neuronal secretion of specialized preresolving mediators (SPMs) 15R-lipoxin A4 that regulates phagocytic microglia. The sequence is that of Prostaglandin G/H synthase 2 (PTGS2) from Equus caballus (Horse).